A 141-amino-acid chain; its full sequence is uncharacterized protein (141 aa).

The segment at 1–101 is disordered; the sequence is FRGRAPRPLV…PDPGRSRRAT (101 aa). Residues 27 to 70 are compositionally biased toward basic and acidic residues; sequence QVRDCGREGDLRAGKAADRRLPRARETCSRFGEGVRQKDVHKGP.

This is an uncharacterized protein from Dhori virus (strain Indian/1313/61) (Dho).